The primary structure comprises 90 residues: Small ribosomal subunit protein uS15 (90 aa).

Belongs to the universal ribosomal protein uS15 family. In terms of assembly, part of the 30S ribosomal subunit. Forms a bridge to the 50S subunit in the 70S ribosome, contacting the 23S rRNA.

Functionally, one of the primary rRNA binding proteins, it binds directly to 16S rRNA where it helps nucleate assembly of the platform of the 30S subunit by binding and bridging several RNA helices of the 16S rRNA. Its function is as follows. Forms an intersubunit bridge (bridge B4) with the 23S rRNA of the 50S subunit in the ribosome. This chain is Small ribosomal subunit protein uS15, found in Campylobacter fetus subsp. fetus (strain 82-40).